Consider the following 508-residue polypeptide: Transposase (508 aa).

Residues 3–65 (LLSVIRRWHF…PFADRLSAWL (63 aa)) form the HTH IS21-type domain. An Integrase catalytic domain is found at 124–299 (LAFEPGEAFQ…TIADIWVEEV (176 aa)).

Belongs to the transposase IS21/IS408/IS1162 family.

Functionally, required for the transposition of the insertion element. This is Transposase (nmoT) from Aminobacter aminovorans (Chelatobacter heintzii).